Consider the following 141-residue polypeptide: Large ribosomal subunit protein uL14 (141 aa).

The protein belongs to the universal ribosomal protein uL14 family. Part of the 50S ribosomal subunit. Forms a cluster with proteins L3 and L24e, part of which may contact the 16S rRNA in 2 intersubunit bridges.

In terms of biological role, binds to 23S rRNA. Forms part of two intersubunit bridges in the 70S ribosome. The protein is Large ribosomal subunit protein uL14 of Pyrococcus furiosus (strain ATCC 43587 / DSM 3638 / JCM 8422 / Vc1).